A 330-amino-acid chain; its full sequence is Low-redox potential peroxidase (330 aa).

The signal sequence occupies residues 1 to 24 (MRSSTHIFVSFVVYCGVFVTSAIA). An N-linked (GlcNAc...) asparagine glycan is attached at Asn27. Intrachain disulfides connect Cys34–Cys285, Cys54–Cys123, and Cys251–Cys314. Residues Gly69, Asp71, and Ser73 each contribute to the Ca(2+) site. His178 is a binding site for heme b. Residues Ser179, Asp196, Thr198, and Asp203 each coordinate Ca(2+).

It belongs to the peroxidase family. Ligninase subfamily. Requires Ca(2+) as cofactor. The cofactor is heme b.

The protein resides in the secreted. It catalyses the reaction 2 a phenolic donor + H2O2 = 2 a phenolic radical donor + 2 H2O. Can oxidize the lignin redox mediator veratryl alcohol to veratryl aldehyde. May be involved in oxidation of lignocellulose substrates. The polypeptide is Low-redox potential peroxidase (LnP) (Taiwanofungus camphoratus (Poroid brown-rot fungus)).